The sequence spans 174 residues: MLHIFYIYSKSRKFWAILICSSISLISIALLNQFFFLLKPCILCIYQRCSLFGITIAGLIALISPKTTLLRLFSIFIWLYSAIKGLYFSNIHMQTTLHPSSSLTCDLFVSFPNWLPLNKWYPIIFDSKISNCYSYPQYLLYLEISQWMLLFFLIYLIIAIFTIISQCHNLFQKK.

The Cytoplasmic portion of the chain corresponds to Met-1 to Phe-14. Residues Trp-15–Leu-31 traverse the membrane as a helical segment. The Periplasmic segment spans residues Asn-32–Cys-49. A disulfide bond links Cys-41 and Cys-44. A helical membrane pass occupies residues Ser-50–Pro-65. Residues Lys-66–Leu-72 lie on the Cytoplasmic side of the membrane. Residues Phe-73–Asn-90 form a helical membrane-spanning segment. The Periplasmic portion of the chain corresponds to Ile-91 to Gln-146. Cys-105 and Cys-132 are oxidised to a cystine. The chain crosses the membrane as a helical span at residues Trp-147–Ser-165. The Cytoplasmic segment spans residues Gln-166 to Lys-174.

The protein belongs to the DsbB family.

The protein localises to the cell inner membrane. Functionally, required for disulfide bond formation in some periplasmic proteins. Acts by oxidizing the DsbA protein. The protein is Disulfide bond formation protein B of Blochmanniella floridana.